A 431-amino-acid chain; its full sequence is Chaperone SurA (431 aa).

Residues 1 to 20 (MKNWRTLILGLALSASTAFA) form the signal peptide. PpiC domains are found at residues 171 to 272 (NDEL…KVND) and 282 to 382 (VTET…QLLD).

It localises to the periplasm. The catalysed reaction is [protein]-peptidylproline (omega=180) = [protein]-peptidylproline (omega=0). Functionally, chaperone involved in the correct folding and assembly of outer membrane proteins. Recognizes specific patterns of aromatic residues and the orientation of their side chains, which are found more frequently in integral outer membrane proteins. May act in both early periplasmic and late outer membrane-associated steps of protein maturation. The polypeptide is Chaperone SurA (Pectobacterium atrosepticum (strain SCRI 1043 / ATCC BAA-672) (Erwinia carotovora subsp. atroseptica)).